We begin with the raw amino-acid sequence, 135 residues long: Small ribosomal subunit protein bS6 (135 aa).

Residues 96-135 (HAEGPSIQMQKRDERERGDRGDRSDRGDRGDRGDRGGFRR) form a disordered region. A compositionally biased stretch (basic and acidic residues) spans 105–135 (QKRDERERGDRGDRSDRGDRGDRGDRGGFRR).

It belongs to the bacterial ribosomal protein bS6 family.

Functionally, binds together with bS18 to 16S ribosomal RNA. This Cereibacter sphaeroides (strain ATCC 17029 / ATH 2.4.9) (Rhodobacter sphaeroides) protein is Small ribosomal subunit protein bS6.